The chain runs to 254 residues: MSTLFISDIHLCSDRPDMTAALVRFLERDAPGADALYVLGDLFEFWIGDDDPNPLHHAIADAFAALRQRGVSIYFIHGNRDFLLGRQFAKRSGMTLLADPCVIDLYGERVLLSHGDLLCTLDLGYQKLRRITQLKWLRWLFLRLPLTRRLAIACKMRGQSQMENVQKSQTIMDVTPAAVDALLRQHGCQLLIHGHTHRPAIHDFTLDGQPARRIVLGDWFEQGSVLVCSPGEQRLEQRTLPSLNPAGAHESDNL.

Positions 8, 10, 41, 79, and 114 each coordinate Mn(2+). Asparagine 79–arginine 80 contacts substrate. The substrate site is built by aspartate 122, serine 160, asparagine 164, lysine 167, and histidine 195. The Mn(2+) site is built by histidine 195 and histidine 197.

The protein belongs to the LpxH family. Mn(2+) serves as cofactor.

Its subcellular location is the cell inner membrane. It catalyses the reaction UDP-2-N,3-O-bis[(3R)-3-hydroxytetradecanoyl]-alpha-D-glucosamine + H2O = 2-N,3-O-bis[(3R)-3-hydroxytetradecanoyl]-alpha-D-glucosaminyl 1-phosphate + UMP + 2 H(+). It participates in glycolipid biosynthesis; lipid IV(A) biosynthesis; lipid IV(A) from (3R)-3-hydroxytetradecanoyl-[acyl-carrier-protein] and UDP-N-acetyl-alpha-D-glucosamine: step 4/6. Functionally, hydrolyzes the pyrophosphate bond of UDP-2,3-diacylglucosamine to yield 2,3-diacylglucosamine 1-phosphate (lipid X) and UMP by catalyzing the attack of water at the alpha-P atom. Involved in the biosynthesis of lipid A, a phosphorylated glycolipid that anchors the lipopolysaccharide to the outer membrane of the cell. The sequence is that of UDP-2,3-diacylglucosamine hydrolase from Aeromonas salmonicida (strain A449).